Here is a 706-residue protein sequence, read N- to C-terminus: Septin ring organizing protein mid2 (706 aa).

2 disordered regions span residues 62–102 (STAP…PFST) and 145–180 (DEASNKSSRSSTPRNSIKSNSSNQGHGDIPIPKKNP). Composition is skewed to polar residues over residues 81–90 (YDQTLSNSSS) and 149–169 (NKSSRSSTPRNSIKSNSSNQG). S379 carries the phosphoserine modification. One can recognise a PH domain in the interval 583-688 (TLLCDGYLCQ…WMSTLRQHLG (106 aa)).

Belongs to the BUD4 family.

Its subcellular location is the cytoplasm. It localises to the cell cortex. The protein localises to the cytoskeleton. Functionally, responsible for the proper stability and function of septins during cytokinesis. Required for the correct formation of the medial septin ring structure in mitosis and for the proper localization of endo-glucanases agn1 and eng1, which are needed for efficient cell separation. May act as a landmark for the localization of hydrolytic proteins to the medial region. This Schizosaccharomyces pombe (strain 972 / ATCC 24843) (Fission yeast) protein is Septin ring organizing protein mid2 (mid2).